The chain runs to 269 residues: MSIFQAIILGAVQGLAEFLPISSSGHLAIVEYFFKQEDLPILFDILLHVATLAAVCTVFAKRIAGLFSVLGRFIIRKSKPEDKDDLMMIAAIIVATAVTGVIGLLLKDWVKTIDIRLIPIFFIITGLLLIASSKIKHNKQAKNVTLLTAAITGLAQGIGVIPGISRSGSTISASLFAGLDREKAGEFSFLLSIPAILAAFILEIKSADNLLAGVSPISLISGMISAFVVGYFSLRFLLKLIKNGKLMYFAFYLIPLGLGLSIYFWGFAG.

8 helical membrane passes run methionine 1–isoleucine 21, leucine 39–phenylalanine 59, leucine 86–leucine 106, threonine 112–serine 132, valine 144–isoleucine 164, alanine 184–isoleucine 204, leucine 210–glycine 230, and phenylalanine 249–glycine 269.

It belongs to the UppP family.

The protein resides in the cell inner membrane. It carries out the reaction di-trans,octa-cis-undecaprenyl diphosphate + H2O = di-trans,octa-cis-undecaprenyl phosphate + phosphate + H(+). Functionally, catalyzes the dephosphorylation of undecaprenyl diphosphate (UPP). Confers resistance to bacitracin. The polypeptide is Undecaprenyl-diphosphatase (Treponema denticola (strain ATCC 35405 / DSM 14222 / CIP 103919 / JCM 8153 / KCTC 15104)).